We begin with the raw amino-acid sequence, 375 residues long: G-protein coupled estrogen receptor 1 (375 aa).

The residue at position 1 (methionine 1) is an N-acetylmethionine. The Extracellular segment spans residues methionine 1–serine 62. N-linked (GlcNAc...) asparagine glycosylation is found at asparagine 25, asparagine 32, and asparagine 44. The chain crosses the membrane as a helical span at residues cysteine 63–asparagine 84. The Cytoplasmic portion of the chain corresponds to isoleucine 85–leucine 96. A helical transmembrane segment spans residues tyrosine 97–histidine 120. Residues glutamate 121–phenylalanine 132 lie on the Extracellular side of the membrane. Residues cysteine 130 and cysteine 207 are joined by a disulfide bond. The chain crosses the membrane as a helical span at residues methionine 133–phenylalanine 153. The Cytoplasmic segment spans residues aspartate 154–arginine 175. The chain crosses the membrane as a helical span at residues leucine 176–threonine 194. Over alanine 195 to threonine 220 the chain is Extracellular. The chain crosses the membrane as a helical span at residues leucine 221 to leucine 236. The Cytoplasmic segment spans residues isoleucine 237–arginine 259. Residues methionine 260 to serine 280 traverse the membrane as a helical segment. The Extracellular segment spans residues valine 281–glycine 306. The helical transmembrane segment at histidine 307–leucine 327 threads the bilayer. Over glycine 328 to valine 375 the chain is Cytoplasmic.

It belongs to the G-protein coupled receptor 1 family. In terms of assembly, homodimer. Heterodimer; heterodimerizes with other G-protein-coupled receptor (GPCRs) like CRHR1, HTR1A and PAQR8. Interacts (via C-terminus tail motif) with DLG4 (via N-terminus tandem pair of PDZ domains); the interaction is direct and induces the increase of GPER1 protein levels residing at the plasma membrane surface in a estradiol-independent manner. Interacts with RAMP3; the interaction confers proper subcellular localization and function in cardioprotection. Interacts with KRT7 and KRT8. Interacts with EGFR; the interaction increases after agonist-induced stimulation in cancer-associated fibroblasts (CAF). Interacts with EGFR and ESR1. Ubiquitinated; ubiquitination occurs at the plasma membrane and leads to proteasome-mediated degradation. Post-translationally, glycosylated. In terms of tissue distribution, expressed in placenta, endothelial and epithelial cells, non laboring and laboring term myometrium, fibroblasts and cancer-associated fibroblasts (CAF), prostate cancer cells and invasive adenocarcinoma (at protein level). Ubiquitously expressed, but is most abundant in placenta. In brain regions, expressed as a 2.8 kb transcript in basal forebrain, frontal cortex, thalamus, hippocampus, caudate and putamen.

The protein localises to the nucleus. The protein resides in the cytoplasm. It localises to the perinuclear region. It is found in the cytoskeleton. Its subcellular location is the cell membrane. The protein localises to the basolateral cell membrane. The protein resides in the cytoplasmic vesicle membrane. It localises to the early endosome. It is found in the recycling endosome. Its subcellular location is the golgi apparatus membrane. The protein localises to the golgi apparatus. The protein resides in the trans-Golgi network. It localises to the endoplasmic reticulum membrane. It is found in the cell projection. Its subcellular location is the dendrite. The protein localises to the dendritic spine membrane. The protein resides in the axon. It localises to the postsynaptic density. It is found in the mitochondrion membrane. Its function is as follows. G-protein coupled estrogen receptor that binds to 17-beta-estradiol (E2) with high affinity, leading to rapid and transient activation of numerous intracellular signaling pathways. Stimulates cAMP production, calcium mobilization and tyrosine kinase Src inducing the release of heparin-bound epidermal growth factor (HB-EGF) and subsequent transactivation of the epidermal growth factor receptor (EGFR), activating downstream signaling pathways such as PI3K/Akt and ERK/MAPK. Mediates pleiotropic functions among others in the cardiovascular, endocrine, reproductive, immune and central nervous systems. Has a role in cardioprotection by reducing cardiac hypertrophy and perivascular fibrosis in a RAMP3-dependent manner. Regulates arterial blood pressure by stimulating vasodilation and reducing vascular smooth muscle and microvascular endothelial cell proliferation. Plays a role in blood glucose homeostasis contributing to the insulin secretion response by pancreatic beta cells. Triggers mitochondrial apoptosis during pachytene spermatocyte differentiation. Stimulates uterine epithelial cell proliferation. Enhances uterine contractility in response to oxytocin. Contributes to thymic atrophy by inducing apoptosis. Attenuates TNF-mediated endothelial expression of leukocyte adhesion molecules. Promotes neuritogenesis in developing hippocampal neurons. Plays a role in acute neuroprotection against NMDA-induced excitotoxic neuronal death. Increases firing activity and intracellular calcium oscillations in luteinizing hormone-releasing hormone (LHRH) neurons. Inhibits early osteoblast proliferation at growth plate during skeletal development. Inhibits mature adipocyte differentiation and lipid accumulation. Involved in the recruitment of beta-arrestin 2 ARRB2 at the plasma membrane in epithelial cells. Also functions as a receptor for aldosterone mediating rapid regulation of vascular contractibility through the PI3K/ERK signaling pathway. Involved in cancer progression regulation. Stimulates cancer-associated fibroblast (CAF) proliferation by a rapid genomic response through the EGFR/ERK transduction pathway. Associated with EGFR, may act as a transcription factor activating growth regulatory genes (c-fos, cyclin D1). Promotes integrin alpha-5/beta-1 and fibronectin (FN) matrix assembly in breast cancer cells. This chain is G-protein coupled estrogen receptor 1, found in Homo sapiens (Human).